A 1383-amino-acid chain; its full sequence is DNA-directed RNA polymerase subunit beta (1383 aa).

Belongs to the RNA polymerase beta chain family. The RNAP catalytic core consists of 2 alpha, 1 beta, 1 beta' and 1 omega subunit. When a sigma factor is associated with the core the holoenzyme is formed, which can initiate transcription.

It carries out the reaction RNA(n) + a ribonucleoside 5'-triphosphate = RNA(n+1) + diphosphate. In terms of biological role, DNA-dependent RNA polymerase catalyzes the transcription of DNA into RNA using the four ribonucleoside triphosphates as substrates. This Xanthomonas oryzae pv. oryzae (strain MAFF 311018) protein is DNA-directed RNA polymerase subunit beta.